The following is a 183-amino-acid chain: 1,6-anhydro-N-acetylmuramyl-L-alanine amidase AmpD (183 aa).

Residues 30-167 (LLVVHNISLP…APDRKTDPGP (138 aa)) enclose the N-acetylmuramoyl-L-alanine amidase domain. His-34 contributes to the Zn(2+) binding site. Glu-116 (proton acceptor) is an active-site residue. His-154 and Asp-164 together coordinate Zn(2+).

This sequence belongs to the N-acetylmuramoyl-L-alanine amidase 2 family. It depends on Zn(2+) as a cofactor.

The protein resides in the cytoplasm. The enzyme catalyses Hydrolyzes the link between N-acetylmuramoyl residues and L-amino acid residues in certain cell-wall glycopeptides.. Its function is as follows. Involved in cell wall peptidoglycan recycling. Specifically cleaves the amide bond between the lactyl group of N-acetylmuramic acid and the alpha-amino group of the L-alanine in degradation products containing an anhydro N-acetylmuramyl moiety. Is also involved in beta-lactamase induction. This chain is 1,6-anhydro-N-acetylmuramyl-L-alanine amidase AmpD (ampD), found in Escherichia coli (strain K12).